We begin with the raw amino-acid sequence, 468 residues long: V-type proton ATPase subunit H (468 aa).

This sequence belongs to the V-ATPase H subunit family. V-ATPase is a heteromultimeric enzyme made up of two complexes: the ATP-hydrolytic V1 complex and the proton translocation V0 complex. The V1 complex consists of three catalytic AB heterodimers that form a heterohexamer, three peripheral stalks each consisting of EG heterodimers, one central rotor including subunits D and F, and the regulatory subunits C and H. The proton translocation complex V0 consists of the proton transport subunit a, a ring of proteolipid subunits c9c'', rotary subunit d, subunits e and f, and the accessory subunits VhaAC45 and ATP6AP2.

Functionally, subunit of the V1 complex of vacuolar(H+)-ATPase (V-ATPase), a multisubunit enzyme composed of a peripheral complex (V1) that hydrolyzes ATP and a membrane integral complex (V0) that translocates protons. V-ATPase is responsible for acidifying and maintaining the pH of intracellular compartments and in some cell types, is targeted to the plasma membrane, where it is responsible for acidifying the extracellular environment. Subunit H is essential for V-ATPase activity, but not for the assembly of the complex. The protein is V-type proton ATPase subunit H (VhaSFD) of Drosophila melanogaster (Fruit fly).